Here is a 148-residue protein sequence, read N- to C-terminus: Multiprotein-bridging factor 1c (148 aa).

Positions 91–145 (IQKARLEKKMSQADLAKQINERTQVVQEYENGKAVPNQAVLAKMEKVLGVKLRGK) constitute an HTH cro/C1-type domain. A DNA-binding region (H-T-H motif) is located at residues 102 to 121 (QADLAKQINERTQVVQEYEN).

It belongs to the MBF1 family. In terms of assembly, binds to TPS5. In terms of tissue distribution, expressed in leaves, roots, stems, flowers, siliques and shoots. Not detected in seeds.

Its subcellular location is the nucleus. The protein localises to the nucleolus. The protein resides in the cytoplasm. Transcriptional coactivator that stimulates transcriptional activity by bridging regulatory proteins and TBP, thereby recruiting TBP to promoters occupied by DNA-binding regulators. Involved in the tolerance to heat and osmotic stress by partially activating the ethylene-response signal transduction pathway. The chain is Multiprotein-bridging factor 1c (MBF1C) from Arabidopsis thaliana (Mouse-ear cress).